The sequence spans 515 residues: ATP synthase subunit alpha (515 aa).

169–176 (GDRQTGKT) lines the ATP pocket.

The protein belongs to the ATPase alpha/beta chains family. As to quaternary structure, F-type ATPases have 2 components, CF(1) - the catalytic core - and CF(0) - the membrane proton channel. CF(1) has five subunits: alpha(3), beta(3), gamma(1), delta(1), epsilon(1). CF(0) has three main subunits: a(1), b(2) and c(9-12). The alpha and beta chains form an alternating ring which encloses part of the gamma chain. CF(1) is attached to CF(0) by a central stalk formed by the gamma and epsilon chains, while a peripheral stalk is formed by the delta and b chains.

It localises to the cell inner membrane. The enzyme catalyses ATP + H2O + 4 H(+)(in) = ADP + phosphate + 5 H(+)(out). Produces ATP from ADP in the presence of a proton gradient across the membrane. The alpha chain is a regulatory subunit. The protein is ATP synthase subunit alpha of Neisseria gonorrhoeae (strain ATCC 700825 / FA 1090).